A 165-amino-acid polypeptide reads, in one-letter code: UPF0303 protein Bphyt_1734 (165 aa).

The protein belongs to the UPF0303 family.

The sequence is that of UPF0303 protein Bphyt_1734 from Paraburkholderia phytofirmans (strain DSM 17436 / LMG 22146 / PsJN) (Burkholderia phytofirmans).